The primary structure comprises 166 residues: Large ribosomal subunit protein uL10 (166 aa).

The protein belongs to the universal ribosomal protein uL10 family. Part of the ribosomal stalk of the 50S ribosomal subunit. The N-terminus interacts with L11 and the large rRNA to form the base of the stalk. The C-terminus forms an elongated spine to which L12 dimers bind in a sequential fashion forming a multimeric L10(L12)X complex.

Its function is as follows. Forms part of the ribosomal stalk, playing a central role in the interaction of the ribosome with GTP-bound translation factors. The polypeptide is Large ribosomal subunit protein uL10 (Limosilactobacillus reuteri (strain DSM 20016) (Lactobacillus reuteri)).